A 286-amino-acid chain; its full sequence is MVLETPVCSPIDKESSSDDVQLNKPPKKKRKLDVVYPPRDNTSSSSDVKPKVPGYCGVKAIGCNRSDELLAEVALHSYNSQTGTNLELMTVTQVMLQSVAHINYHMILDAFDPANNSLSSIEICLWDAAVKNNEKLRLVTTFCSLEGSGDKGSQWDPNGVDVLYTGVMPKWLDDGALSGSEKLHYYEVNDSDLQENKWLHLYAQVGAYSKWDLGMVKHFPLEIKKVVVQTMEDDIESNLKLKSSNAIFYITFTTSGGVECACIIRQTRNGRPQHMCLEINNVEMDK.

The disordered stretch occupies residues 1–49; sequence MVLETPVCSPIDKESSSDDVQLNKPPKKKRKLDVVYPPRDNTSSSSDVK.

It belongs to the UPF0725 (EMB2204) family.

The protein is UPF0725 protein At2g20620 of Arabidopsis thaliana (Mouse-ear cress).